The sequence spans 228 residues: Cytochrome c oxidase subunit 2 (228 aa).

At 1-14 (MPHASQLSLQEAMG) the chain is on the mitochondrial intermembrane side. The helical transmembrane segment at 15-45 (PTMEEVIFLHDHVLLLTCLMTMVITMFTLTA) threads the bilayer. Residues 46–59 (TTTALTHNDPTEEV) lie on the Mitochondrial matrix side of the membrane. Residues 60–87 (EQLEAAWTVAPIMILILTALPSVRSLYL) form a helical membrane-spanning segment. The Mitochondrial intermembrane portion of the chain corresponds to 88-228 (MEEVFNPYLT…HFEQWLISEQ (141 aa)). His162, Cys197, Glu199, Cys201, His205, and Met208 together coordinate Cu cation. Glu199 serves as a coordination point for Mg(2+).

This sequence belongs to the cytochrome c oxidase subunit 2 family. Component of the cytochrome c oxidase (complex IV, CIV), a multisubunit enzyme composed of 14 subunits. The complex is composed of a catalytic core of 3 subunits MT-CO1, MT-CO2 and MT-CO3, encoded in the mitochondrial DNA, and 11 supernumerary subunits COX4I, COX5A, COX5B, COX6A, COX6B, COX6C, COX7A, COX7B, COX7C, COX8 and NDUFA4, which are encoded in the nuclear genome. The complex exists as a monomer or a dimer and forms supercomplexes (SCs) in the inner mitochondrial membrane with NADH-ubiquinone oxidoreductase (complex I, CI) and ubiquinol-cytochrome c oxidoreductase (cytochrome b-c1 complex, complex III, CIII), resulting in different assemblies (supercomplex SCI(1)III(2)IV(1) and megacomplex MCI(2)III(2)IV(2)). Found in a complex with TMEM177, COA6, COX18, COX20, SCO1 and SCO2. Interacts with TMEM177 in a COX20-dependent manner. Interacts with COX20. Interacts with COX16. Cu cation is required as a cofactor.

Its subcellular location is the mitochondrion inner membrane. The catalysed reaction is 4 Fe(II)-[cytochrome c] + O2 + 8 H(+)(in) = 4 Fe(III)-[cytochrome c] + 2 H2O + 4 H(+)(out). In terms of biological role, component of the cytochrome c oxidase, the last enzyme in the mitochondrial electron transport chain which drives oxidative phosphorylation. The respiratory chain contains 3 multisubunit complexes succinate dehydrogenase (complex II, CII), ubiquinol-cytochrome c oxidoreductase (cytochrome b-c1 complex, complex III, CIII) and cytochrome c oxidase (complex IV, CIV), that cooperate to transfer electrons derived from NADH and succinate to molecular oxygen, creating an electrochemical gradient over the inner membrane that drives transmembrane transport and the ATP synthase. Cytochrome c oxidase is the component of the respiratory chain that catalyzes the reduction of oxygen to water. Electrons originating from reduced cytochrome c in the intermembrane space (IMS) are transferred via the dinuclear copper A center (CU(A)) of subunit 2 and heme A of subunit 1 to the active site in subunit 1, a binuclear center (BNC) formed by heme A3 and copper B (CU(B)). The BNC reduces molecular oxygen to 2 water molecules using 4 electrons from cytochrome c in the IMS and 4 protons from the mitochondrial matrix. In Lycodon semicarinatus (Ryukyu odd-tooth snake), this protein is Cytochrome c oxidase subunit 2 (MT-CO2).